Here is a 336-residue protein sequence, read N- to C-terminus: Dihydroorotate dehydrogenase (quinone) (336 aa).

Residues 62–66 (AGLDK) and Thr86 contribute to the FMN site. Position 66 (Lys66) interacts with substrate. 111-115 (NRMGF) contacts substrate. The FMN site is built by Asn139 and Asn172. Asn172 lines the substrate pocket. Ser175 (nucleophile) is an active-site residue. Substrate is bound at residue Asn177. Residues Lys217 and Thr245 each coordinate FMN. 246–247 (NT) is a binding site for substrate. FMN-binding positions include Gly268, Gly297, and 318-319 (YS).

The protein belongs to the dihydroorotate dehydrogenase family. Type 2 subfamily. Monomer. The cofactor is FMN.

It is found in the cell membrane. It carries out the reaction (S)-dihydroorotate + a quinone = orotate + a quinol. The protein operates within pyrimidine metabolism; UMP biosynthesis via de novo pathway; orotate from (S)-dihydroorotate (quinone route): step 1/1. Functionally, catalyzes the conversion of dihydroorotate to orotate with quinone as electron acceptor. The polypeptide is Dihydroorotate dehydrogenase (quinone) (Pectobacterium atrosepticum (strain SCRI 1043 / ATCC BAA-672) (Erwinia carotovora subsp. atroseptica)).